The chain runs to 553 residues: Pseudouridylate synthase RPUSD2 (553 aa).

Residues 76-135 (AVGKQVPESGDQAQGGEGQLPSNGEQTPAPVADSGKRKKRRGATGERVVPPPKKRRTGVS) form a disordered region. The active site involves Asp287. Thr490 is subject to Phosphothreonine.

This sequence belongs to the pseudouridine synthase RluA family.

The catalysed reaction is a uridine in mRNA = a pseudouridine in mRNA. Pseudouridine synthase that catalyzes pseudouridylation of mRNAs. The protein is Pseudouridylate synthase RPUSD2 of Mus musculus (Mouse).